Reading from the N-terminus, the 500-residue chain is Probable cytosol aminopeptidase (500 aa).

The Mn(2+) site is built by lysine 265 and aspartate 270. Residue lysine 277 is part of the active site. Residues aspartate 288, aspartate 347, and glutamate 349 each coordinate Mn(2+). Residue arginine 351 is part of the active site.

This sequence belongs to the peptidase M17 family. Mn(2+) is required as a cofactor.

It is found in the cytoplasm. It catalyses the reaction Release of an N-terminal amino acid, Xaa-|-Yaa-, in which Xaa is preferably Leu, but may be other amino acids including Pro although not Arg or Lys, and Yaa may be Pro. Amino acid amides and methyl esters are also readily hydrolyzed, but rates on arylamides are exceedingly low.. The enzyme catalyses Release of an N-terminal amino acid, preferentially leucine, but not glutamic or aspartic acids.. Functionally, presumably involved in the processing and regular turnover of intracellular proteins. Catalyzes the removal of unsubstituted N-terminal amino acids from various peptides. This chain is Probable cytosol aminopeptidase, found in Rickettsia typhi (strain ATCC VR-144 / Wilmington).